The following is a 382-amino-acid chain: Galactokinase (382 aa).

Glu-34–Asp-37 is a binding site for substrate. Gly-124–Ser-130 is a binding site for ATP. The Mg(2+) site is built by Ser-130 and Glu-162. Asp-174 serves as the catalytic Proton acceptor. Tyr-223 is a substrate binding site.

The protein belongs to the GHMP kinase family. GalK subfamily.

The protein localises to the cytoplasm. It carries out the reaction alpha-D-galactose + ATP = alpha-D-galactose 1-phosphate + ADP + H(+). It functions in the pathway carbohydrate metabolism; galactose metabolism. Functionally, catalyzes the transfer of the gamma-phosphate of ATP to D-galactose to form alpha-D-galactose-1-phosphate (Gal-1-P). In Salmonella paratyphi C (strain RKS4594), this protein is Galactokinase.